The sequence spans 176 residues: Endoribonuclease YbeY (176 aa).

The Zn(2+) site is built by His128, His132, and His138.

The protein belongs to the endoribonuclease YbeY family. Zn(2+) is required as a cofactor.

The protein resides in the cytoplasm. Functionally, single strand-specific metallo-endoribonuclease involved in late-stage 70S ribosome quality control and in maturation of the 3' terminus of the 16S rRNA. The sequence is that of Endoribonuclease YbeY from Zymomonas mobilis subsp. mobilis (strain ATCC 31821 / ZM4 / CP4).